The primary structure comprises 140 residues: Protein NrdI (140 aa).

Belongs to the NrdI family.

Functionally, probably involved in ribonucleotide reductase function. The protein is Protein NrdI of Ruegeria sp. (strain TM1040) (Silicibacter sp.).